Consider the following 156-residue polypeptide: Small ribosomal subunit protein uS7 (156 aa).

Belongs to the universal ribosomal protein uS7 family. As to quaternary structure, part of the 30S ribosomal subunit. Contacts proteins S9 and S11.

Its function is as follows. One of the primary rRNA binding proteins, it binds directly to 16S rRNA where it nucleates assembly of the head domain of the 30S subunit. Is located at the subunit interface close to the decoding center, probably blocks exit of the E-site tRNA. The chain is Small ribosomal subunit protein uS7 from Brucella abortus (strain S19).